A 128-amino-acid polypeptide reads, in one-letter code: Ribonuclease pancreatic (128 aa).

A disordered region spans residues Lys-1–Ser-20. Substrate-binding residues include Lys-7 and Arg-10. The Proton acceptor role is filled by His-12. Disulfide bonds link Cys-26-Cys-84, Cys-40-Cys-95, Cys-58-Cys-110, and Cys-65-Cys-72. An N-linked (GlcNAc...) asparagine glycan is attached at Asn-34. Residues Lys-41–Thr-45, Lys-66, and Arg-85 contribute to the substrate site. His-119 serves as the catalytic Proton donor.

Belongs to the pancreatic ribonuclease family. In terms of assembly, monomer. Interacts with and forms tight 1:1 complexes with RNH1. Dimerization of two such complexes may occur. Interaction with RNH1 inhibits this protein. Pancreas.

It is found in the secreted. The catalysed reaction is an [RNA] containing cytidine + H2O = an [RNA]-3'-cytidine-3'-phosphate + a 5'-hydroxy-ribonucleotide-3'-[RNA].. It carries out the reaction an [RNA] containing uridine + H2O = an [RNA]-3'-uridine-3'-phosphate + a 5'-hydroxy-ribonucleotide-3'-[RNA].. Functionally, endonuclease that catalyzes the cleavage of RNA on the 3' side of pyrimidine nucleotides. Acts on single-stranded and double-stranded RNA. This is Ribonuclease pancreatic (RNASE1) from Choloepus hoffmanni (Hoffmann's two-fingered sloth).